Reading from the N-terminus, the 268-residue chain is MASTQCFLHQHALSSSAARTTSSVSSQRYVSSLKPNQLVCRAQKQSSPQEDDGNSVVVSRRLALTVLIGAAAIGSKVSPADAAYGEAANVFGKPKENTDFLAYNGDGFKLQVPAKWNPSKEVEFPGQVLRYEDNFDSTSNLIVTVTPTDKKSITDYGSPEEFLTQVDFLLGKQAYFGKTDSEGGFESGAVATANLLETSSSTVGGKEYYILSVLTRTADGDEGGKHQLISATVNGGKLYICKAQAGDKRWFKGARKFVENAATSFSVA.

The transit peptide at 1-82 (MASTQCFLHQ…IGSKVSPADA (82 aa)) directs the protein to the chloroplast.

This sequence belongs to the PsbP family.

The protein localises to the plastid. The protein resides in the chloroplast thylakoid membrane. May be involved in the regulation of photosystem II. This Nicotiana tabacum (Common tobacco) protein is Oxygen-evolving enhancer protein 2-1, chloroplastic (PSBP1).